The following is a 309-amino-acid chain: Glutaminase (309 aa).

Substrate-binding residues include S64, N114, E160, N167, Y191, Y243, and V261.

This sequence belongs to the glutaminase family. Homotetramer.

The catalysed reaction is L-glutamine + H2O = L-glutamate + NH4(+). The chain is Glutaminase from Methylobacterium radiotolerans (strain ATCC 27329 / DSM 1819 / JCM 2831 / NBRC 15690 / NCIMB 10815 / 0-1).